Reading from the N-terminus, the 342-residue chain is DNA primase small subunit PriS (342 aa).

Catalysis depends on residues aspartate 97, aspartate 99, and aspartate 276.

The protein belongs to the eukaryotic-type primase small subunit family. Heterodimer of a small subunit (PriS) and a large subunit (PriL). Mg(2+) is required as a cofactor. The cofactor is Mn(2+).

Functionally, catalytic subunit of DNA primase, an RNA polymerase that catalyzes the synthesis of short RNA molecules used as primers for DNA polymerase during DNA replication. The small subunit contains the primase catalytic core and has DNA synthesis activity on its own. Binding to the large subunit stabilizes and modulates the activity, increasing the rate of DNA synthesis while decreasing the length of the DNA fragments, and conferring RNA synthesis capability. The DNA polymerase activity may enable DNA primase to also catalyze primer extension after primer synthesis. May also play a role in DNA repair. The sequence is that of DNA primase small subunit PriS from Thermococcus sibiricus (strain DSM 12597 / MM 739).